A 248-amino-acid chain; its full sequence is Aspartate/glutamate leucyltransferase (248 aa).

Belongs to the R-transferase family. Bpt subfamily.

The protein resides in the cytoplasm. The enzyme catalyses N-terminal L-glutamyl-[protein] + L-leucyl-tRNA(Leu) = N-terminal L-leucyl-L-glutamyl-[protein] + tRNA(Leu) + H(+). The catalysed reaction is N-terminal L-aspartyl-[protein] + L-leucyl-tRNA(Leu) = N-terminal L-leucyl-L-aspartyl-[protein] + tRNA(Leu) + H(+). Functions in the N-end rule pathway of protein degradation where it conjugates Leu from its aminoacyl-tRNA to the N-termini of proteins containing an N-terminal aspartate or glutamate. This is Aspartate/glutamate leucyltransferase from Polynucleobacter asymbioticus (strain DSM 18221 / CIP 109841 / QLW-P1DMWA-1) (Polynucleobacter necessarius subsp. asymbioticus).